The chain runs to 470 residues: GTPase Der (470 aa).

EngA-type G domains follow at residues 32-195 and 206-379; these read PVVA…PTIS and RRVA…KSWD. GTP is bound by residues 38-45, 85-89, 147-150, 212-219, 259-263, and 324-327; these read GRPNVGKS, DTGGW, NKVD, GKPNVGKS, DTAGL, and NKWD. The region spanning 380 to 462 is the KH-like domain; the sequence is TRVSTGRLNT…PIRINVRVRE (83 aa).

This sequence belongs to the TRAFAC class TrmE-Era-EngA-EngB-Septin-like GTPase superfamily. EngA (Der) GTPase family. In terms of assembly, associates with the 50S ribosomal subunit.

Its function is as follows. GTPase that plays an essential role in the late steps of ribosome biogenesis. The chain is GTPase Der from Mycolicibacterium vanbaalenii (strain DSM 7251 / JCM 13017 / BCRC 16820 / KCTC 9966 / NRRL B-24157 / PYR-1) (Mycobacterium vanbaalenii).